A 105-amino-acid chain; its full sequence is Circadian clock oscillator protein KaiB (105 aa).

Belongs to the KaiB family. May undergo a major conformational rearrangment; in the free state forms homooligomers. When bound to KaiC switches to a monomeric thioredoxin-fold (KaiB(fs)). The active oscillator complex is probably KaiC(6):KaiB(6).

Its function is as follows. Component of the KaiBC clock protein complex, which constitutes the main circadian regulator in cyanobacteria; it may modify the ATPase activity of KaiC. In terms of biological role, may be a metamorphic protein which reversibly switches between an inactive tetrameric fold and a rare, thioredoxin-like monomeric fold (KaiB(fs)). KaiB(fs) binds phospho-KaiC, and perhaps clock output effectors. The sequence is that of Circadian clock oscillator protein KaiB from Prochlorococcus marinus (strain MIT 9312).